Here is a 292-residue protein sequence, read N- to C-terminus: MKGTIIKGIGGFYYIKIDNSEEIIECKARGKFRHTELTPMIGDYVEISIDKNNKGAIEKIYERRSELFRPAVANVTQALVVFSFKNPDINIDLLNKFLLLCEYNNLKAIVCFNKMDLVNKEDYKDIISMIEQAGYDIIFLNAKEERNMDIIKKLIKDNVTVFCGPSGVGKSTMLNKIIGKETMITGNISEKLKRGKHTTRHSELIYVDEGLLVDTPGFSSLDINFMEKEDLLHCIPEFRDFIGECKFTGCLHHREPNCAVKKAVEEGHIHKDRYNFYIKTLEEFMNRRKKKW.

In terms of domain architecture, CP-type G spans 64-221 (RSELFRPAVA…LVDTPGFSSL (158 aa)). GTP contacts are provided by residues 113-116 (NKMD) and 164-172 (GPSGVGKST). Residues C245, C250, H252, and C258 each coordinate Zn(2+).

It belongs to the TRAFAC class YlqF/YawG GTPase family. RsgA subfamily. Monomer. Associates with 30S ribosomal subunit, binds 16S rRNA. The cofactor is Zn(2+).

It localises to the cytoplasm. Functionally, one of several proteins that assist in the late maturation steps of the functional core of the 30S ribosomal subunit. Helps release RbfA from mature subunits. May play a role in the assembly of ribosomal proteins into the subunit. Circularly permuted GTPase that catalyzes slow GTP hydrolysis, GTPase activity is stimulated by the 30S ribosomal subunit. In Clostridium botulinum (strain ATCC 19397 / Type A), this protein is Small ribosomal subunit biogenesis GTPase RsgA.